Here is a 235-residue protein sequence, read N- to C-terminus: Large ribosomal subunit protein uL1 (235 aa).

It belongs to the universal ribosomal protein uL1 family. In terms of assembly, part of the 50S ribosomal subunit.

In terms of biological role, binds directly to 23S rRNA. The L1 stalk is quite mobile in the ribosome, and is involved in E site tRNA release. Its function is as follows. Protein L1 is also a translational repressor protein, it controls the translation of the L11 operon by binding to its mRNA. In Symbiobacterium thermophilum (strain DSM 24528 / JCM 14929 / IAM 14863 / T), this protein is Large ribosomal subunit protein uL1.